The sequence spans 985 residues: Disease resistance protein At4g27190 (985 aa).

Positions 24–88 (ANAIKFKSNV…ISKARLKLEE (65 aa)) form a coiled coil. The NB-ARC domain occupies 167–429 (IGVWGMGGVG…MAEGFMEELG (263 aa)). 171–178 (GMGGVGKT) provides a ligand contact to ATP. LRR repeat units follow at residues 502–523 (SLRRVSLMNNKLESLPDLVEEF), 526–547 (KTSVLLLQGNFLLKEVPIGFLQ), 551–572 (TLRILNLSGTRIKSFPSCSLLR), 575–597 (SLHSLFLRDCFKLVKLPSLETLA), 598–620 (KLELLDLCGTHILEFPRGLEELK), and 621–643 (RFRHLDLSRTLHLESIPARVVSR).

It belongs to the disease resistance NB-LRR family.

In terms of biological role, disease resistance protein. The chain is Disease resistance protein At4g27190 from Arabidopsis thaliana (Mouse-ear cress).